Reading from the N-terminus, the 382-residue chain is Mannitol-1-phosphate 5-dehydrogenase (382 aa).

NAD(+) is bound at residue 3 to 14 (ALHFGAGNIGRG).

It belongs to the mannitol dehydrogenase family.

It carries out the reaction D-mannitol 1-phosphate + NAD(+) = beta-D-fructose 6-phosphate + NADH + H(+). This Klebsiella pneumoniae protein is Mannitol-1-phosphate 5-dehydrogenase (mtlD).